Reading from the N-terminus, the 138-residue chain is Putative protein encoded by LINC02912 (138 aa).

Helical transmembrane passes span Phe32–Cys52 and Cys65–Gln85. The tract at residues Ser109 to Gly138 is disordered.

The protein localises to the membrane. This is Putative protein encoded by LINC02912 from Homo sapiens (Human).